The primary structure comprises 196 residues: DnaA initiator-associating protein DiaA (196 aa).

The region spanning 34–196 is the SIS domain; the sequence is MVQSLLNGNK…DNTLFPHQDD (163 aa).

Belongs to the SIS family. DiaA subfamily. As to quaternary structure, homotetramer; dimer of dimers.

Required for the timely initiation of chromosomal replication via direct interactions with the DnaA initiator protein. The polypeptide is DnaA initiator-associating protein DiaA (Photorhabdus laumondii subsp. laumondii (strain DSM 15139 / CIP 105565 / TT01) (Photorhabdus luminescens subsp. laumondii)).